Here is a 264-residue protein sequence, read N- to C-terminus: Thymidylate synthase (264 aa).

Residue Arg-21 participates in dUMP binding. His-51 contributes to the (6R)-5,10-methylene-5,6,7,8-tetrahydrofolate binding site. 126–127 is a binding site for dUMP; that stretch reads RR. The Nucleophile role is filled by Cys-146. DUMP-binding positions include 166–169, Asn-177, and 207–209; these read RSAD and HLY. A (6R)-5,10-methylene-5,6,7,8-tetrahydrofolate-binding site is contributed by Asp-169. Residue Ala-263 participates in (6R)-5,10-methylene-5,6,7,8-tetrahydrofolate binding.

Belongs to the thymidylate synthase family. Bacterial-type ThyA subfamily. In terms of assembly, homodimer.

The protein localises to the cytoplasm. The enzyme catalyses dUMP + (6R)-5,10-methylene-5,6,7,8-tetrahydrofolate = 7,8-dihydrofolate + dTMP. It functions in the pathway pyrimidine metabolism; dTTP biosynthesis. In terms of biological role, catalyzes the reductive methylation of 2'-deoxyuridine-5'-monophosphate (dUMP) to 2'-deoxythymidine-5'-monophosphate (dTMP) while utilizing 5,10-methylenetetrahydrofolate (mTHF) as the methyl donor and reductant in the reaction, yielding dihydrofolate (DHF) as a by-product. This enzymatic reaction provides an intracellular de novo source of dTMP, an essential precursor for DNA biosynthesis. This Rhizobium johnstonii (strain DSM 114642 / LMG 32736 / 3841) (Rhizobium leguminosarum bv. viciae) protein is Thymidylate synthase.